The primary structure comprises 180 residues: UPF0149 protein XC_0904 (180 aa).

The protein belongs to the UPF0149 family.

In Xanthomonas campestris pv. campestris (strain 8004), this protein is UPF0149 protein XC_0904.